Reading from the N-terminus, the 314-residue chain is (-)-isopiperitenone reductase (314 aa).

10–33 is an NADP(+) binding site; that stretch reads VTGANKGIGFEICRQLAEKGIIVI. S182 is a substrate binding site.

Belongs to the short-chain dehydrogenases/reductases (SDR) family.

Its subcellular location is the cytoplasm. The catalysed reaction is (2R,5R)-isopulegone + NADP(+) = (6R)-isopiperitenone + NADPH + H(+). The protein operates within secondary metabolite biosynthesis; terpenoid biosynthesis. In terms of biological role, monoterpene synthase that catalyzes the specific reduction of the 1(2)-double bond of (-)-isopiperitenone to produce (+)-cis-isopulegone. Does not catalyze the reverse reaction. Unable to reduce (+)-pulegone, (+)-cis-isopulegone, (-)-menthone or the 1,2-double bond of (-)-carvone. Able to utilize NADH with 20% the efficiency of NADPH. The protein is (-)-isopiperitenone reductase of Mentha piperita (Peppermint).